We begin with the raw amino-acid sequence, 450 residues long: Tubulin beta-3 chain (450 aa).

Residues 1 to 4 carry the MREI motif motif; that stretch reads MREI. The GTP site is built by Gln11, Glu69, Ser138, Gly142, Thr143, and Gly144. Glu69 is a binding site for Mg(2+). Ser172 is subject to Phosphoserine; by CDK1. The GTP site is built by Asn204 and Asn226. A disordered region spans residues 422–450; that stretch reads YQQYQDATAEEEGEMYEDDDEESEAQGPK. Residues 429 to 450 show a composition bias toward acidic residues; the sequence is TAEEEGEMYEDDDEESEAQGPK. At Glu438 the chain carries 5-glutamyl polyglutamate. The residue at position 444 (Ser444) is a Phosphoserine.

The protein belongs to the tubulin family. In terms of assembly, heterodimer of alpha- and beta-tubulin. A typical microtubule is a hollow water-filled tube with an outer diameter of 25 nm and an inner diameter of 15 nM. Alpha-beta heterodimers associate head-to-tail to form protofilaments running lengthwise along the microtubule wall with the beta-tubulin subunit facing the microtubule plus end conferring a structural polarity. Microtubules usually have 13 protofilaments but different protofilament numbers can be found in some organisms and specialized cells. Interacts with gamma-tubulin; the interaction allows microtubules to nucleate from the gamma-tubulin ring complex (gTuRC). Interacts with UNC5C (via cytoplasmic domain); this interaction is decreased by NTN1/Netrin-1. Interacts with NLRP5/MATER at cytoskeleton microtubules. Interacts with DPYSL5. Interacts with CFAP61. It depends on Mg(2+) as a cofactor. Some glutamate residues at the C-terminus are polyglycylated, resulting in polyglycine chains on the gamma-carboxyl group. Glycylation is mainly limited to tubulin incorporated into axonemes (cilia and flagella) whereas glutamylation is prevalent in neuronal cells, centrioles, axonemes, and the mitotic spindle. Both modifications can coexist on the same protein on adjacent residues, and lowering polyglycylation levels increases polyglutamylation, and reciprocally. Cilia and flagella glycylation is required for their stability and maintenance. Flagella glycylation controls sperm motility. In terms of processing, some glutamate residues at the C-terminus are polyglutamylated, resulting in polyglutamate chains on the gamma-carboxyl group. Polyglutamylation plays a key role in microtubule severing by spastin (SPAST). SPAST preferentially recognizes and acts on microtubules decorated with short polyglutamate tails: severing activity by SPAST increases as the number of glutamates per tubulin rises from one to eight, but decreases beyond this glutamylation threshold. Glutamylation is also involved in cilia motility. Post-translationally, phosphorylated on Ser-172 by CDK1 during the cell cycle, from metaphase to telophase, but not in interphase. This phosphorylation inhibits tubulin incorporation into microtubules.

It localises to the cytoplasm. Its subcellular location is the cytoskeleton. It is found in the cell projection. The protein resides in the growth cone. The protein localises to the lamellipodium. It localises to the filopodium. Tubulin is the major constituent of microtubules, protein filaments consisting of alpha- and beta-tubulin heterodimers. Microtubules grow by the addition of GTP-tubulin dimers to the microtubule end, where a stabilizing cap forms. Below the cap, alpha-beta tubulin heterodimers are in GDP-bound state, owing to GTPase activity of alpha-tubulin. TUBB3 plays a critical role in proper axon guidance and maintenance. Binding of NTN1/Netrin-1 to its receptor UNC5C might cause dissociation of UNC5C from polymerized TUBB3 in microtubules and thereby lead to increased microtubule dynamics and axon repulsion. Plays a role in dorsal root ganglion axon projection towards the spinal cord. This chain is Tubulin beta-3 chain (Tubb3), found in Rattus norvegicus (Rat).